The primary structure comprises 196 residues: CAG pathogenicity island protein 13 (196 aa).

The sequence is that of CAG pathogenicity island protein 13 (cagS) from Helicobacter pylori (strain ATCC 700392 / 26695) (Campylobacter pylori).